Here is a 304-residue protein sequence, read N- to C-terminus: UDP-N-acetylenolpyruvoylglucosamine reductase (304 aa).

The region spanning Lys33 to Gly198 is the FAD-binding PCMH-type domain. Arg177 is a catalytic residue. Ser227 acts as the Proton donor in catalysis. Residue Glu297 is part of the active site.

Belongs to the MurB family. It depends on FAD as a cofactor.

Its subcellular location is the cytoplasm. It catalyses the reaction UDP-N-acetyl-alpha-D-muramate + NADP(+) = UDP-N-acetyl-3-O-(1-carboxyvinyl)-alpha-D-glucosamine + NADPH + H(+). It participates in cell wall biogenesis; peptidoglycan biosynthesis. In terms of biological role, cell wall formation. This Clostridium beijerinckii (strain ATCC 51743 / NCIMB 8052) (Clostridium acetobutylicum) protein is UDP-N-acetylenolpyruvoylglucosamine reductase.